A 328-amino-acid chain; its full sequence is MALRMPFNQAFWEEYLSGQDATLPSLPDTSTLSSRVIRILGGNPGAMHLQGTNTYLVGTGPSRILIDTGQGLPIWLSRIVGVLHSNNISISHILLTHWHGDHTGGVPDLISYNPTLGEHVYKNLPDAGQKPIEDGQIFAVEGATVRAVFTPGHSVDHMCFLLEEENALFTGDNVLGHGFSVAPDLGRYMESLELMAGLGCVLGYPAHGAVIGDLPSKLEEYIRHKEMRVQGILSVLVKERERVEGDRGTEGRRKGGMTLHEIARAMFGTVPDEVIDQAMAPFLMQALWKLTEDRKVGFEPGDPVKRKWFAVARRKTKPPRQHGSVARQ.

Residues His-97, His-99, Asp-101, and His-102 each coordinate Zn(2+). Asp-101 functions as the Proton donor/acceptor in the catalytic mechanism.

This sequence belongs to the metallo-beta-lactamase superfamily. Requires Zn(2+) as cofactor.

It functions in the pathway secondary metabolite biosynthesis. Its function is as follows. Lactamase-like protein; part of the gene cluster that mediates the biosynthesis of neosartoricin, a prenylated anthracenone that exhibits T-cell antiproliferative activity, suggestive of a physiological role as an immunosuppressive agent. The non-reducing polyketide synthase nscA probably synthesizes and cyclizes the decaketide backbone. The hydrolase nscB then mediates the product release through hydrolysis followed by spontaneous decarboxylation. The prenyltransferase nscD catalyzes the addition of the dimethylallyl group to the aromatic C5. The FAD-dependent monooxygenase nscC is then responsible for the stereospecific hydroxylation at C2. There is no gene encoding O-acetyltransferase in the nsc gene cluster; thus, the last step of 2-O-acetylation leading to neosartoricin may be catalyzed by an unidentified O-acetyltransferase. The chain is Lactamase-like protein nscB from Neosartorya fischeri (strain ATCC 1020 / DSM 3700 / CBS 544.65 / FGSC A1164 / JCM 1740 / NRRL 181 / WB 181) (Aspergillus fischerianus).